The chain runs to 344 residues: N-acetyl-gamma-glutamyl-phosphate reductase (344 aa).

C150 is an active-site residue.

Belongs to the NAGSA dehydrogenase family. Type 1 subfamily.

It is found in the cytoplasm. It catalyses the reaction N-acetyl-L-glutamate 5-semialdehyde + phosphate + NADP(+) = N-acetyl-L-glutamyl 5-phosphate + NADPH + H(+). It functions in the pathway amino-acid biosynthesis; L-arginine biosynthesis; N(2)-acetyl-L-ornithine from L-glutamate: step 3/4. Functionally, catalyzes the NADPH-dependent reduction of N-acetyl-5-glutamyl phosphate to yield N-acetyl-L-glutamate 5-semialdehyde. This Pseudomonas syringae pv. syringae (strain B728a) protein is N-acetyl-gamma-glutamyl-phosphate reductase.